The following is a 201-amino-acid chain: Casparian strip membrane protein 7 (201 aa).

Residues 1–11 are compositionally biased toward acidic residues; the sequence is MEAGEEIEDGE. Positions 1–26 are disordered; sequence MEAGEEIEDGEPSTPTYKAHHPPPHL. The Cytoplasmic portion of the chain corresponds to 1 to 34; that stretch reads MEAGEEIEDGEPSTPTYKAHHPPPHLPPPMRSSG. The helical transmembrane segment at 35–55 threads the bilayer; it reads VSLVLSVADLVLRFVAIGGTA. Over 56 to 86 the chain is Extracellular; it reads GSAIAMATTSETLPFAAPFVRFRAEYSDLPT. The helical transmembrane segment at 87 to 107 threads the bilayer; that stretch reads LMFFVVASSVVCAYLVLSLPA. Topologically, residues 108 to 128 are cytoplasmic; it reads SVVHVVRPGARSSRAILAFLD. Residues 129–149 traverse the membrane as a helical segment; it reads TVMLALLTASASAAAAIVYLA. Topologically, residues 150–171 are extracellular; the sequence is HRGSARANWLGICQQFTSFCQR. Residues 172-192 traverse the membrane as a helical segment; it reads ITASLVGSFAAAVVLVALVFL. Residues 193–201 are Cytoplasmic-facing; it reads SALSLARRA.

It belongs to the Casparian strip membrane proteins (CASP) family. As to quaternary structure, homodimer and heterodimers.

The protein localises to the cell membrane. Regulates membrane-cell wall junctions and localized cell wall deposition. Required for establishment of the Casparian strip membrane domain (CSD) and the subsequent formation of Casparian strips, a cell wall modification of the root endodermis that determines an apoplastic barrier between the intraorganismal apoplasm and the extraorganismal apoplasm and prevents lateral diffusion. The sequence is that of Casparian strip membrane protein 7 from Oryza sativa subsp. japonica (Rice).